The sequence spans 129 residues: uncharacterized protein (129 aa).

Residues 1–17 (MCPECFFLMLFFCGYRA) form the signal peptide. Over residues 26 to 36 (SSSSSSSFRSS) the composition is skewed to low complexity. The disordered stretch occupies residues 26-76 (SSSSSSSFRSSPAYGFSGRPPGGAGCRERSQRSCLRPGGLPSLTRNPGLQR).

This is an uncharacterized protein from Escherichia coli O157:H7.